Here is a 952-residue protein sequence, read N- to C-terminus: Ubiquitin carboxyl-terminal hydrolase 15 (952 aa).

An N-acetylalanine modification is found at A2. The segment at 2–223 (AEGGAADLDI…KNEDGTWPRG (222 aa)) is mediates interaction with SART3. The 112-residue stretch at 7–118 (ADLDIQRSDI…GQEPIARKVV (112 aa)) folds into the DUSP domain. The residue at position 226 (T226) is a Phosphothreonine. Residues 260 to 904 (CGLSNLGNTC…AAYVLFYQRQ (645 aa)) enclose the USP domain. The active-site Nucleophile is the C269. The residue at position 573 (T573) is a Phosphothreonine. Positions 598–666 (TEGSLHCCKD…GDNDSENGLC (69 aa)) are disordered. A compositionally biased stretch (acidic residues) spans 627–644 (METDEPDDESSQDQELPS). H862 functions as the Proton acceptor in the catalytic mechanism. Residues 923-952 (SAATGIPLESDEDSNDNDNDIENENCMHTN) are disordered. A compositionally biased stretch (acidic residues) spans 931 to 945 (ESDEDSNDNDNDIEN). 2 positions are modified to phosphoserine: S932 and S936.

It belongs to the peptidase C19 family. In terms of assembly, a homodimer structure has been reported; however it is unclear whether the protein form a homodimer in vivo. Identified in a complex with the COP9 signalosome complex (CSN). Interacts with SMAD1, SMAD2 and SMAD3; the interaction is direct. Forms a complex with SMURF2 and SMAD7. Interacts with TGFBR1. Interacts with SART3; the interaction is direct. May interact with RNF20 and RNF40. May interact with PRKN. Interacts with INCA1. In terms of processing, phosphorylated. Phosphorylation protects against ubiquitination and subsequent degradation by the proteasome. Ubiquitinated, leading to degradation by the proteasome.

It is found in the cytoplasm. It localises to the nucleus. The protein localises to the mitochondrion. The enzyme catalyses Thiol-dependent hydrolysis of ester, thioester, amide, peptide and isopeptide bonds formed by the C-terminal Gly of ubiquitin (a 76-residue protein attached to proteins as an intracellular targeting signal).. Its function is as follows. Hydrolase that removes conjugated ubiquitin from target proteins and regulates various pathways such as the TGF-beta receptor signaling, NF-kappa-B and RNF41/NRDP1-PRKN pathways. Acts as a key regulator of TGF-beta receptor signaling pathway, but the precise mechanism is still unclear: according to a report, acts by promoting deubiquitination of monoubiquitinated R-SMADs (SMAD1, SMAD2 and/or SMAD3), thereby alleviating inhibition of R-SMADs and promoting activation of TGF-beta target genes. According to another reports, regulates the TGF-beta receptor signaling pathway by mediating deubiquitination and stabilization of TGFBR1, leading to an enhanced TGF-beta signal. Able to mediate deubiquitination of monoubiquitinated substrates, 'Lys-27'-, 'Lys-48'- and 'Lys-63'-linked polyubiquitin chains. May also regulate gene expression and/or DNA repair through the deubiquitination of histone H2B. Acts as an inhibitor of mitophagy by counteracting the action of parkin (PRKN): hydrolyzes cleavage of 'Lys-48'- and 'Lys-63'-linked polyubiquitin chains attached by parkin on target proteins such as MFN2, thereby reducing parkin's ability to drive mitophagy. Acts as an associated component of COP9 signalosome complex (CSN) and regulates different pathways via this association: regulates NF-kappa-B by mediating deubiquitination of NFKBIA and deubiquitinates substrates bound to VCP. Involved in endosome organization by mediating deubiquitination of SQSTM1: ubiquitinated SQSTM1 forms a molecular bridge that restrains cognate vesicles in the perinuclear region and its deubiquitination releases target vesicles for fast transport into the cell periphery. Acts as a negative regulator of antifungal immunity by mediating 'Lys-27'-linked deubiquitination of CARD9, thereby inactivating CARD9. This is Ubiquitin carboxyl-terminal hydrolase 15 (USP15) from Bos taurus (Bovine).